The sequence spans 560 residues: Membrane protein insertase YidC (560 aa).

6 helical membrane passes run 5–25 (IINL…WQYF), 334–354 (AIDF…MNFF), 357–377 (YVGN…LLMF), 431–451 (LPIL…YVTI), 476–496 (LFGL…WPIL), and 522–542 (FMPL…LIYW).

The protein belongs to the OXA1/ALB3/YidC family. Type 1 subfamily. As to quaternary structure, interacts with the Sec translocase complex via SecD. Specifically interacts with transmembrane segments of nascent integral membrane proteins during membrane integration.

It is found in the cell inner membrane. Functionally, required for the insertion and/or proper folding and/or complex formation of integral membrane proteins into the membrane. Involved in integration of membrane proteins that insert both dependently and independently of the Sec translocase complex, as well as at least some lipoproteins. Aids folding of multispanning membrane proteins. This is Membrane protein insertase YidC from Rickettsia conorii (strain ATCC VR-613 / Malish 7).